The chain runs to 400 residues: Egl nine homolog 1 (400 aa).

N-acetylalanine is present on A2. Residues 6–20 (GGPGVLSASERDRQY) are required for nuclear export. S12 carries the phosphoserine modification. Positions 21, 24, 33, 36, 42, 46, 54, and 58 each coordinate Zn(2+). The MYND-type; atypical zinc finger occupies 21–58 (CELCGKMENLLRCGRCRSSFYCCKEHQRQDWKKHKLVC). Over residues 62–74 (EAPRAQPAPAQPR) the composition is skewed to low complexity. Residues 62–161 (EAPRAQPAPA…PGGGLRPNGQ (100 aa)) are disordered. S114 is subject to Phosphoserine. A compositionally biased stretch (gly residues) spans 142 to 157 (AGGGPGEALSPGGGLR). 2 positions are modified to S-nitrosocysteine: C178 and C185. Residues 218 to 228 (VSQKSDSSKDI) form a beta(2)beta(3) 'finger-like' loop region. The 99-residue stretch at 271–369 (GRTKAMVACY…RYAITVWYFD (99 aa)) folds into the Fe2OG dioxygenase domain. C279 bears the S-nitrosocysteine mark. The Fe cation site is built by H290 and D292. C300 and C303 each carry S-nitrosocysteine. H351 serves as a coordination point for Fe cation. R360 contacts 2-oxoglutarate.

In terms of assembly, monomer. Interacts with ING4; the interaction inhibits the hydroxylation of HIF alpha proteins. Interacts with PTGES3 (via PXLE motif); thereby recruiting EGLN1 to the HSP90 pathway to facilitate HIF alpha proteins hydroxylation. Interacts with LIMD1. Found in a complex composed of LIMD1, VHL, EGLN1/PHD2, ELOB and CUL2. Interacts with EPAS1. Interacts with CBFA2T3 and HIF1A. The cofactor is Fe(2+). Requires L-ascorbate as cofactor. In terms of processing, S-nitrosylation inhibits the enzyme activity up to 60% under aerobic conditions. Chelation of Fe(2+) has no effect on the S-nitrosylation. It is uncertain whether nitrosylation occurs on Cys-300 or Cys-303. In terms of tissue distribution, expressed in heart, brain liver, skeletal muscle and kidney. Low levels were detected in the lung. Constitutively expressed during differentiation of C2C12 skeletal myocytes.

Its subcellular location is the cytoplasm. It is found in the nucleus. The catalysed reaction is L-prolyl-[hypoxia-inducible factor alpha subunit] + 2-oxoglutarate + O2 = trans-4-hydroxy-L-prolyl-[hypoxia-inducible factor alpha subunit] + succinate + CO2. In terms of biological role, cellular oxygen sensor that catalyzes, under normoxic conditions, the post-translational formation of 4-hydroxyproline in hypoxia-inducible factor (HIF) alpha proteins. Hydroxylates a specific proline found in each of the oxygen-dependent degradation (ODD) domains (N-terminal, NODD, and C-terminal, CODD) of HIF1A. Also hydroxylates HIF2A. Has a preference for the CODD site for both HIF1A and HIF1B. Hydroxylated HIFs are then targeted for proteasomal degradation via the von Hippel-Lindau ubiquitination complex. Under hypoxic conditions, the hydroxylation reaction is attenuated allowing HIFs to escape degradation resulting in their translocation to the nucleus, heterodimerization with HIF1B, and increased expression of hypoxy-inducible genes. EGLN1 is the most important isozyme under normoxia and, through regulating the stability of HIF1, involved in various hypoxia-influenced processes such as angiogenesis in retinal and cardiac functionality. Target proteins are preferentially recognized via a LXXLAP motif. This Mus musculus (Mouse) protein is Egl nine homolog 1 (Egln1).